We begin with the raw amino-acid sequence, 293 residues long: Heterogeneous nuclear ribonucleoprotein C-like 1 (293 aa).

The RRM domain occupies 16 to 87; it reads SRVFIGNLNT…QVVDINLAAE (72 aa). 2 disordered regions span residues 137–177 and 206–293; these read ALAV…KLKG and KEQS…QDDS. Positions 177–225 form a coiled coil; the sequence is GDDLQAIKQELTQIKQKVDSLLENLEKIEKEQSKQEVEVKNAKSEEEQS. Basic and acidic residues-rich tracts occupy residues 206–222 and 229–240; these read KEQS…KSEE and MKKDETHVKMES. 2 stretches are compositionally biased toward acidic residues: residues 242–267 and 275–284; these read GGAE…DDQL and KEAEEGEDDR.

This sequence belongs to the RRM HNRPC family. RALY subfamily.

Its subcellular location is the nucleus. Functionally, may play a role in nucleosome assembly by neutralizing basic proteins such as A and B core hnRNPs. The sequence is that of Heterogeneous nuclear ribonucleoprotein C-like 1 (HNRNPCL1) from Homo sapiens (Human).